Consider the following 295-residue polypeptide: 33 kDa chaperonin (295 aa).

Cystine bridges form between Cys-236/Cys-238 and Cys-269/Cys-272.

The protein belongs to the HSP33 family. In terms of processing, under oxidizing conditions two disulfide bonds are formed involving the reactive cysteines. Under reducing conditions zinc is bound to the reactive cysteines and the protein is inactive.

The protein localises to the cytoplasm. Its function is as follows. Redox regulated molecular chaperone. Protects both thermally unfolding and oxidatively damaged proteins from irreversible aggregation. Plays an important role in the bacterial defense system toward oxidative stress. The sequence is that of 33 kDa chaperonin from Citrifermentans bemidjiense (strain ATCC BAA-1014 / DSM 16622 / JCM 12645 / Bem) (Geobacter bemidjiensis).